We begin with the raw amino-acid sequence, 165 residues long: E3 ubiquitin-protein ligase RNF181 (165 aa).

Residues 88 to 129 form an RING-type; atypical zinc finger; sequence CPVCLLEFEEEETVIEMPCHHLFHSNCILPWLSKTNSCPLCR. Residues 136–165 form a disordered region; the sequence is DDSYEEHKKDKARRQQQQHRLENLHGAMYT. Residue T165 is modified to Phosphothreonine.

Belongs to the RNF181 family. As to quaternary structure, directly interacts with ITGA2B and, as a result, with integrin ITGA2B/ITGB3. There is no evidence that integrin ITGA2B/ITGB3 is an endogenous substrate for RNF181-directed ubiquitination. Post-translationally, auto-ubiquitinated as part of the enzymatic reaction.

It carries out the reaction S-ubiquitinyl-[E2 ubiquitin-conjugating enzyme]-L-cysteine + [acceptor protein]-L-lysine = [E2 ubiquitin-conjugating enzyme]-L-cysteine + N(6)-ubiquitinyl-[acceptor protein]-L-lysine.. The protein operates within protein modification; protein ubiquitination. Functionally, E3 ubiquitin-protein ligase which accepts ubiquitin from an E2 ubiquitin-conjugating enzyme in the form of a thioester and then directly transfers the ubiquitin to targeted substrates. Catalyzes monoubiquitination of 26S proteasome subunit PSMC2/RPT1. The sequence is that of E3 ubiquitin-protein ligase RNF181 (Rnf181) from Rattus norvegicus (Rat).